Here is a 187-residue protein sequence, read N- to C-terminus: MSEEFELDTDDLKRRMDGAMANLKTEFASLRTGRASASMLEPVMVDAYGSMTPINQVGTVNVPEPRMVTINVWDKGLVGKVEKAIRESGLGINPQLNGTIIMLPIPELNEERRRELTKVAGQYAEHARVSIRNVRRDGMDQIKKAKADGMSEDDQKFWETEVQELTDKMIKAVDAALETKQAEIMQV.

The protein belongs to the RRF family.

The protein resides in the cytoplasm. Functionally, responsible for the release of ribosomes from messenger RNA at the termination of protein biosynthesis. May increase the efficiency of translation by recycling ribosomes from one round of translation to another. In Ruegeria sp. (strain TM1040) (Silicibacter sp.), this protein is Ribosome-recycling factor.